The primary structure comprises 538 residues: Cytochrome P450 734A4 (538 aa).

The chain crosses the membrane as a helical span at residues 5 to 27 (VAVAAAVLLLLHVAARVADAVWW). A heme-binding site is contributed by Cys480.

This sequence belongs to the cytochrome P450 family. Requires heme as cofactor. As to expression, expressed in roots, shoot apex, leaf sheaths, leaf blades, internodes and panicles.

It is found in the membrane. In terms of biological role, cytochrome P450 involved in brassinosteroids (BRs) inactivation and regulation of BRs homeostasis. Is a multifunctional and multisubstrate enzyme that controls the endogenous bioactive BR content both by direct inactivation of castasterone (CS) and by decreasing the levels of BR precursors. Catalyzes the oxidation of carbon 22 hydroxylated BR intermediates to produce C26 oxidized metabolites. The polypeptide is Cytochrome P450 734A4 (CYP734A4) (Oryza sativa subsp. japonica (Rice)).